A 241-amino-acid polypeptide reads, in one-letter code: Ribonuclease PH (241 aa).

Phosphate contacts are provided by residues arginine 90 and 128–130; that span reads GTR.

Belongs to the RNase PH family. Homohexameric ring arranged as a trimer of dimers.

The catalysed reaction is tRNA(n+1) + phosphate = tRNA(n) + a ribonucleoside 5'-diphosphate. Functionally, phosphorolytic 3'-5' exoribonuclease that plays an important role in tRNA 3'-end maturation. Removes nucleotide residues following the 3'-CCA terminus of tRNAs; can also add nucleotides to the ends of RNA molecules by using nucleoside diphosphates as substrates, but this may not be physiologically important. Probably plays a role in initiation of 16S rRNA degradation (leading to ribosome degradation) during starvation. In Corynebacterium diphtheriae (strain ATCC 700971 / NCTC 13129 / Biotype gravis), this protein is Ribonuclease PH.